Reading from the N-terminus, the 116-residue chain is Large ribosomal subunit protein bL20 (116 aa).

The protein belongs to the bacterial ribosomal protein bL20 family.

In terms of biological role, binds directly to 23S ribosomal RNA and is necessary for the in vitro assembly process of the 50S ribosomal subunit. It is not involved in the protein synthesizing functions of that subunit. The protein is Large ribosomal subunit protein bL20 of Helicobacter pylori (strain P12).